Consider the following 444-residue polypeptide: Methylenetetrahydrofolate--tRNA-(uracil-5-)-methyltransferase TrmFO (444 aa).

An FAD-binding site is contributed by 10–15 (GAGLAG).

The protein belongs to the MnmG family. TrmFO subfamily. It depends on FAD as a cofactor.

The protein resides in the cytoplasm. The enzyme catalyses uridine(54) in tRNA + (6R)-5,10-methylene-5,6,7,8-tetrahydrofolate + NADH + H(+) = 5-methyluridine(54) in tRNA + (6S)-5,6,7,8-tetrahydrofolate + NAD(+). It catalyses the reaction uridine(54) in tRNA + (6R)-5,10-methylene-5,6,7,8-tetrahydrofolate + NADPH + H(+) = 5-methyluridine(54) in tRNA + (6S)-5,6,7,8-tetrahydrofolate + NADP(+). In terms of biological role, catalyzes the folate-dependent formation of 5-methyl-uridine at position 54 (M-5-U54) in all tRNAs. In Streptococcus sanguinis (strain SK36), this protein is Methylenetetrahydrofolate--tRNA-(uracil-5-)-methyltransferase TrmFO.